Here is a 204-residue protein sequence, read N- to C-terminus: Probable UbiX-like flavin prenyltransferase (204 aa).

Residues Gly-21–Thr-23, Ser-47, Ser-98–Ser-101, and Arg-133 contribute to the FMN site.

It belongs to the UbiX/PAD1 family. YclB subfamily. As to quaternary structure, homododecamer.

The catalysed reaction is dimethylallyl phosphate + FMNH2 = prenylated FMNH2 + phosphate. Its function is as follows. Involved in the non-oxidative decarboxylation and detoxification of phenolic derivatives under both aerobic and anaerobic conditions. Flavin prenyltransferase that catalyzes the synthesis of the prenylated FMN cofactor (prenyl-FMN) for phenolic acid decarboxylase. The protein is Probable UbiX-like flavin prenyltransferase of Bacillus subtilis (strain 168).